We begin with the raw amino-acid sequence, 45 residues long: Iota-conotoxin-like R11.13 (45 aa).

Cystine bridges form between C5/C19, C12/C22, C18/C27, and C21/C36. A D-leucine modification is found at L43. A propeptide (removed by a carboxypeptidase) is located at residue R45.

This sequence belongs to the conotoxin I1 superfamily. As to expression, expressed by the venom duct.

The protein resides in the secreted. Functionally, iota-conotoxins bind to voltage-gated sodium channels (Nav) and act as agonists by shifting the voltage-dependence of activation to more hyperpolarized levels. Produces general excitatory symptoms. This chain is Iota-conotoxin-like R11.13, found in Conus radiatus (Rayed cone).